The sequence spans 590 residues: Aspartate--tRNA ligase (590 aa).

Position 174 (Glu-174) interacts with L-aspartate. The segment at 198–201 is aspartate; the sequence is QLMK. Arg-220 contributes to the L-aspartate binding site. Residues 220-222 and Gln-229 contribute to the ATP site; that span reads RDE. His-443 contacts L-aspartate. Residue Glu-484 coordinates ATP. Arg-491 contributes to the L-aspartate binding site. 536–539 provides a ligand contact to ATP; sequence GLDR.

Belongs to the class-II aminoacyl-tRNA synthetase family. Type 1 subfamily. In terms of assembly, homodimer.

The protein localises to the cytoplasm. The enzyme catalyses tRNA(Asp) + L-aspartate + ATP = L-aspartyl-tRNA(Asp) + AMP + diphosphate. Catalyzes the attachment of L-aspartate to tRNA(Asp) in a two-step reaction: L-aspartate is first activated by ATP to form Asp-AMP and then transferred to the acceptor end of tRNA(Asp). The polypeptide is Aspartate--tRNA ligase (Lactococcus lactis subsp. cremoris (strain SK11)).